Here is a 367-residue protein sequence, read N- to C-terminus: MNLADKVLVVNDNLPIRTNKPVHSGKVRSVYWLTEEDSARLIKDKGYDVPADAPLAIMVISDRISAFDCVWQGENGLNGVPGKGTALNAISNHWFKLFKDKGLADSHILDIPHPLVWIVQKARPVMIEAIARQYITGSMWRSYTKGEREFCGITIPEGLEKDQKLPELLITPSTKGVLTGLEGVPEADDVNVSRSDIERHVEGFNFTKLADIDLYEKLLKEGFDVISDALAEHDQVFVDTKFEFGYVNDAAGNEKLIYMDEVGTPDSSRIWDGSSHRDGKIIEQSKEGFRQWLLNHFPDSDILLNKNRMEERFALARDNKLPESVMMDISNTYVGIAEKVIGSKLKISENPKQEIIDILREEYQLIV.

It belongs to the SAICAR synthetase family.

The enzyme catalyses 5-amino-1-(5-phospho-D-ribosyl)imidazole-4-carboxylate + L-aspartate + ATP = (2S)-2-[5-amino-1-(5-phospho-beta-D-ribosyl)imidazole-4-carboxamido]succinate + ADP + phosphate + 2 H(+). The protein operates within purine metabolism; IMP biosynthesis via de novo pathway; 5-amino-1-(5-phospho-D-ribosyl)imidazole-4-carboxamide from 5-amino-1-(5-phospho-D-ribosyl)imidazole-4-carboxylate: step 1/2. The polypeptide is Phosphoribosylaminoimidazole-succinocarboxamide synthase (Shewanella halifaxensis (strain HAW-EB4)).